The following is a 385-amino-acid chain: Putative glutamate--cysteine ligase 2 (385 aa).

The protein belongs to the glutamate--cysteine ligase type 2 family. YbdK subfamily.

It carries out the reaction L-cysteine + L-glutamate + ATP = gamma-L-glutamyl-L-cysteine + ADP + phosphate + H(+). Functionally, ATP-dependent carboxylate-amine ligase which exhibits weak glutamate--cysteine ligase activity. The polypeptide is Putative glutamate--cysteine ligase 2 (Solibacter usitatus (strain Ellin6076)).